Here is a 187-residue protein sequence, read N- to C-terminus: dITP/XTP pyrophosphatase (187 aa).

Position 7–12 (Thr-7–Lys-12) interacts with substrate. Mg(2+)-binding residues include Glu-36 and Asp-64. Asp-64 (proton acceptor) is an active-site residue. Residues Ala-65, Phe-140–Asp-143, Lys-163, and His-168–Arg-169 each bind substrate.

Belongs to the HAM1 NTPase family. In terms of assembly, homodimer. It depends on Mg(2+) as a cofactor.

It carries out the reaction XTP + H2O = XMP + diphosphate + H(+). The catalysed reaction is dITP + H2O = dIMP + diphosphate + H(+). The enzyme catalyses ITP + H2O = IMP + diphosphate + H(+). Functionally, pyrophosphatase that catalyzes the hydrolysis of nucleoside triphosphates to their monophosphate derivatives, with a high preference for the non-canonical purine nucleotides XTP (xanthosine triphosphate), dITP (deoxyinosine triphosphate) and ITP. Seems to function as a house-cleaning enzyme that removes non-canonical purine nucleotides from the nucleotide pool, thus preventing their incorporation into DNA/RNA and avoiding chromosomal lesions. This chain is dITP/XTP pyrophosphatase, found in Methanothermobacter marburgensis (strain ATCC BAA-927 / DSM 2133 / JCM 14651 / NBRC 100331 / OCM 82 / Marburg) (Methanobacterium thermoautotrophicum).